A 407-amino-acid chain; its full sequence is Tyrosine--tRNA ligase (407 aa).

Tyr-36 lines the L-tyrosine pocket. A 'HIGH' region motif is present at residues 41 to 50 (PTADSLHIGH). L-tyrosine is bound by residues Tyr-169 and Gln-173. Residues 229-233 (KMGKT) carry the 'KMSKS' region motif. Lys-232 contacts ATP. The S4 RNA-binding domain maps to 341 to 407 (KGILDILVET…KKSYNRIVIE (67 aa)).

It belongs to the class-I aminoacyl-tRNA synthetase family. TyrS type 1 subfamily. As to quaternary structure, homodimer.

It localises to the cytoplasm. The enzyme catalyses tRNA(Tyr) + L-tyrosine + ATP = L-tyrosyl-tRNA(Tyr) + AMP + diphosphate + H(+). Catalyzes the attachment of tyrosine to tRNA(Tyr) in a two-step reaction: tyrosine is first activated by ATP to form Tyr-AMP and then transferred to the acceptor end of tRNA(Tyr). In Clostridium tetani (strain Massachusetts / E88), this protein is Tyrosine--tRNA ligase.